Reading from the N-terminus, the 566-residue chain is Cytochrome c oxidase subunit 1 (566 aa).

The next 7 membrane-spanning stretches (helical) occupy residues 29 to 49 (IGVLYLFTGGLVGLISVAFTV), 97 to 117 (VMITGHGILMMFFVVIPALFG), 141 to 161 (LSYWLYVAGTSLAVASLFAPG), 189 to 209 (LAIFAVHLSGASSILGAINMI), 227 to 247 (LFAWSIFVTAWLILLALPVLA), 278 to 298 (ILWFFGHPEVYIIVLPAFGIV), and 310 to 330 (IFGYLPMVYAMVAIGVLGFVV). His102 is a Fe(II)-heme a binding site. Cu cation-binding residues include His284 and Tyr288. Positions 284–288 (HPEVY) form a cross-link, 1'-histidyl-3'-tyrosine (His-Tyr). 2 residues coordinate Cu cation: His333 and His334. Helical transmembrane passes span 348 to 368 (FMMATMVIAVPTGIKIFSWIA) and 381 to 401 (MLWALGFLFLFTVGGVTGIVL). Heme a3 is bound at residue His419. 3 consecutive transmembrane segments (helical) span residues 420-440 (FHYVMSLGAVFGIFAGIYFWI), 455-475 (LHFWMMFVGANLTFFPQHFLG), and 499-519 (LGAFLSFASFLFFLGVIFYTL). His421 contacts Fe(II)-heme a. Positions 543 to 566 (TSPPPEHTFEQLPKREDWERAPAH) are disordered. Residues 549 to 566 (HTFEQLPKREDWERAPAH) show a composition bias toward basic and acidic residues.

It belongs to the heme-copper respiratory oxidase family. Cu(2+) serves as cofactor. Heme is required as a cofactor.

It localises to the cell membrane. The catalysed reaction is 4 Fe(II)-[cytochrome c] + O2 + 8 H(+)(in) = 4 Fe(III)-[cytochrome c] + 2 H2O + 4 H(+)(out). It participates in energy metabolism; oxidative phosphorylation. Its function is as follows. Cytochrome c oxidase is the component of the respiratory chain that catalyzes the reduction of oxygen to water. Subunits 1-3 form the functional core of the enzyme complex. Co I is the catalytic subunit of the enzyme. Electrons originating in cytochrome c are transferred via the copper A center of subunit 2 and heme a of subunit 1 to the bimetallic center formed by heme a3 and copper B. This cytochrome c oxidase shows proton pump activity across the membrane in addition to the electron transfer. The chain is Cytochrome c oxidase subunit 1 (ctaD) from Cereibacter sphaeroides (Rhodobacter sphaeroides).